We begin with the raw amino-acid sequence, 551 residues long: Colicin E3 (551 aa).

3 disordered regions span residues 1–74, 243–269, and 293–320; these read MSGG…SGGG, TLSP…NTRD, and PDQV…EAAE. A translocation (T) domain region spans residues 1–315; it reads MSGGDGRGHN…RQQEWDATHP (315 aa). Over residues 20–35 the composition is skewed to gly residues; it reads INGGPTGLGVGGGASD. A Binds to TolB motif is present at residues 35–39; the sequence is DGSGW. The segment covering 36–45 has biased composition (low complexity); the sequence is GSGWSSENNP. Gly residues predominate over residues 46 to 74; sequence WGGGSGSGIHWGGGSGHGNGGGNGNSGGG. The span at 296 to 320 shows a compositional bias: basic and acidic residues; sequence VKQRQDEENRRQQEWDATHPVEAAE. Positions 316-378 form a coiled coil; that stretch reads VEAAERNYER…IAEIKQFNRF (63 aa). Positions 316–450 are receptor-binding (R) domain; that stretch reads VEAAERNYER…SAENNLNDEK (135 aa). The short motif at 379-385 is the Hairpin element; that stretch reads AHDPMAG. Positions 386 to 450 form a coiled coil; sequence GHRMWQMAGL…SAENNLNDEK (65 aa). The interval 406 to 505 is disordered; the sequence is NKQAAFDAAA…KRWTGDKGRK (100 aa). Basic and acidic residues predominate over residues 430-472; it reads ESRKKKEDKKRSAENNLNDEKNKPRKGFKDYGHDYHPAPKTEN. Residues 451-456 form a linker region; it reads NKPRKG. Positions 455 to 551 are ribosome inactivating activity; that stretch reads KGFKDYGHDY…DPKRNIKKYL (97 aa). The tract at residues 457-551 is cytotoxic RNase (C) domain; the sequence is FKDYGHDYHP…DPKRNIKKYL (95 aa). The active-site Proton donor is the His513. The active-site Proton acceptor is Glu517. A disordered region spans residues 517-551; it reads EGYRASDGQHLGSFDPKTGNQLKGPDPKRNIKKYL. A binding of immunity protein region spans residues 530 to 551; the sequence is FDPKTGNQLKGPDPKRNIKKYL. Residue Arg545 is part of the active site.

The protein belongs to the cloacin colicin family. As to quaternary structure, native colicin E3 is a 1:1 complex of A chain and protein B (cognate immunity protein, Im3); protein A is 1,000-fold more active in inactivating ribosomes than the native complex. The cytotoxic fragment (residues 456-551, C95) forms a 1:1 complex with Im3. The receptor-binding (R) domain binds obliquely to its receptor BtuB without displacing BtuB's central plug; binding unfolds the R domain. The N-terminal 83 residues (T83) bind OmpF; trimeric complexes with colicin E3, BtuB and OmpF can be cross-linked and immunoprecipitated. Probably inserts into the OmpF pore as an unfolded peptide and spans the OmpF pore. In a complex with T.thermophilus 70S ribosomes, cytotoxic fragment C96 contacts 16S rRNA, 23S rRNA, mRNA, P-site tRNA and ribosomal protein uS12.

Its subcellular location is the secreted. Colicins are polypeptide toxins produced by and active against E.coli and closely related bacteria. Cleaves 16S rRNA between adenosine-1492 and guanosine-1493 (E.coli 16S rRNA numbering), releasing a 49 nucleotide (nt) 'colicin' fragment. Inactivates 70S ribosomes or 30S subunits by endonucleolytically cleaving 16S RNA at a specific site about 50 nt from its C-terminus. Produces 5'-OH-guanosine and a 2',3'-cyclic phosphate adenosine. Mixing a susceptible (e.g. strain K12 / A19) and colicin E3 producing strain results in total protein translation inhibition within 11 minutes. Its activity is inhibited by cognate immunity protein Im3. Functionally, uses BtuB, the vitamin B transporter, as a receptor on the outer membrane; binds via the receptor (R) domain. Then the translocation domain (T) probably 'fishes' for its outer membrane translocon protein, OmpF. The N-terminal 83 residues (T83) can bind to and occlude OmpF channels. A complex of the cytotoxic C-terminal 96 residues (C96) plus the immunity protein does not occlude OmpF; upon complex separation from the immunity protein C96 becomes disordered and is able to bind OmpF. The N-terminus probably binds TolB and then reinserts into an empty pore of trimeric OmpF; the rest of the protein is pulled through OmpF and crosses the inner membrane, where the cytotoxic fragment is probably released by protease FtsH. This is Colicin E3 (ceaC) from Escherichia coli.